Consider the following 356-residue polypeptide: MTSQASAPKIPQLWVPLPSGIHPSWREIDQGSAAWLDRFGLYSDHAQRERLTRISVGEITGRGGPDGRLAALQWTADFLMWLFAFDDEYCDEGPAAASPDATLLIITKLQRIVEVPWAAPADDNYSAALLELRLRLDDLTTPVQTARWAASFRAYLQGQIWMAANSTYGRIPTLSDHLAVRLDSSGVKIFSTLSEIIHGYDLPAADYDRHDVRGFVEVFAAIIGWSNDLVSYHKERRRSQDSYGNVVDLIAHERQCSVEEAVSETATMHTRAMALYLRLRDQILRDAEPELRKWITDCDSWIRADYDWSLTTHRYVNPDDPADLPVGSAEAPFRAREADQPLPIASVSWWWTLLKD.

Aspartate 86 and aspartate 91 together coordinate Mg(2+). A DDXXXD motif motif is present at residues 86–91 (DDEYCD). Position 181 (arginine 181) interacts with substrate. 2 residues coordinate Mg(2+): asparagine 227 and serine 231. Position 234 (lysine 234) interacts with substrate. Glutamate 235 contacts Mg(2+). 314–315 (RY) is a binding site for substrate.

The protein belongs to the terpene synthase family. Requires Mg(2+) as cofactor.

The enzyme catalyses (2E,6E)-farnesyl diphosphate + H2O = (+)-(1(10)E,4E,6S,7R)-germacradien-6-ol + diphosphate. It functions in the pathway secondary metabolite biosynthesis; terpenoid biosynthesis. In terms of biological role, catalyzes the conversion of (2E,6E)-farnesyl diphosphate (FPP) to yield the sesquiterpene (+)-(1(10)E,4E,6S,7R)-germacradien-6-ol via a putative 1,10-cyclization, which could require the abstraction of the pyrophosphate from FPP to yield the (E,E)-germacradienyl cation. The only accepted substrate is farnesyl diphosphate (FPP). The chain is (+)-(1(10)E,4E,6S,7R)-germacradien-6-ol synthase from Streptomyces pratensis (strain ATCC 33331 / IAF-45CD).